The chain runs to 932 residues: Glycine dehydrogenase (decarboxylating) (932 aa).

Lys-685 carries the N6-(pyridoxal phosphate)lysine modification.

This sequence belongs to the GcvP family. In terms of assembly, the glycine cleavage system is composed of four proteins: P, T, L and H. It depends on pyridoxal 5'-phosphate as a cofactor.

It carries out the reaction N(6)-[(R)-lipoyl]-L-lysyl-[glycine-cleavage complex H protein] + glycine + H(+) = N(6)-[(R)-S(8)-aminomethyldihydrolipoyl]-L-lysyl-[glycine-cleavage complex H protein] + CO2. The glycine cleavage system catalyzes the degradation of glycine. The P protein binds the alpha-amino group of glycine through its pyridoxal phosphate cofactor; CO(2) is released and the remaining methylamine moiety is then transferred to the lipoamide cofactor of the H protein. This Brucella suis (strain ATCC 23445 / NCTC 10510) protein is Glycine dehydrogenase (decarboxylating).